We begin with the raw amino-acid sequence, 423 residues long: Tegument protein UL43 (423 aa).

Residues 1-12 (MEKTPAETTAVS) are compositionally biased toward polar residues. A disordered region spans residues 1–46 (MEKTPAETTAVSAGNVPRDSIPCITNVSADTRGRTRPSRPATVPQR).

Belongs to the herpesviridae US22 family.

The protein resides in the virion tegument. This Homo sapiens (Human) protein is Tegument protein UL43 (UL43).